The primary structure comprises 492 residues: PHO85 cyclin-8 (492 aa).

Disordered stretches follow at residues 1–32 (MANDQDPNKSLINDALTRSMSEFYDDDDDNDS), 143–163 (SGSGKLPGRVKSDTATQGTGR), and 223–252 (KVNSNSQIDTDNHSHESGNTTNNETDENES). Residues 8-20 (NKSLINDALTRSM) are compositionally biased toward polar residues. The segment covering 23 to 32 (FYDDDDDNDS) has biased composition (acidic residues). Ser32 carries the phosphoserine modification.

Belongs to the cyclin family. PHO80 subfamily. Forms a cyclin-CDK complex with PHO85.

The protein resides in the cytoplasm. It localises to the nucleus. Its function is as follows. Cyclin partner of the cyclin-dependent kinase (CDK) PHO85. Together with cyclin PCL10, negatively controls glycogen accumulation under favorable growth conditions. Involved in phosphorylation and negative regulation of glycogen synthase GSY2. Also has minor GLC8 kinase activity. The polypeptide is PHO85 cyclin-8 (PCL8) (Saccharomyces cerevisiae (strain ATCC 204508 / S288c) (Baker's yeast)).